The primary structure comprises 540 residues: NXPE family member 1 (540 aa).

An N-terminal signal peptide occupies residues 1–22 (MLHKYLKLICLLAAICVLCIIS). Residues asparagine 24, asparagine 42, asparagine 87, asparagine 155, asparagine 205, and asparagine 291 are each glycosylated (N-linked (GlcNAc...) asparagine).

This sequence belongs to the NXPE family. In terms of tissue distribution, intestine, and to a lesser extent in kidney.

The protein localises to the secreted. The sequence is that of NXPE family member 1 (NXPE1) from Oryctolagus cuniculus (Rabbit).